A 206-amino-acid chain; its full sequence is Thymidylate kinase (206 aa).

Position 11-18 (11-18 (GIDGAGKT)) interacts with ATP.

The protein belongs to the thymidylate kinase family.

It carries out the reaction dTMP + ATP = dTDP + ADP. Functionally, phosphorylation of dTMP to form dTDP in both de novo and salvage pathways of dTTP synthesis. The protein is Thymidylate kinase of Burkholderia pseudomallei (strain 1106a).